The primary structure comprises 445 residues: Phosphoglucosamine mutase (445 aa).

The active-site Phosphoserine intermediate is S102. Mg(2+) contacts are provided by S102, D241, D243, and D245. At S102 the chain carries Phosphoserine.

It belongs to the phosphohexose mutase family. The cofactor is Mg(2+). Activated by phosphorylation.

The catalysed reaction is alpha-D-glucosamine 1-phosphate = D-glucosamine 6-phosphate. Catalyzes the conversion of glucosamine-6-phosphate to glucosamine-1-phosphate. This chain is Phosphoglucosamine mutase, found in Novosphingobium aromaticivorans (strain ATCC 700278 / DSM 12444 / CCUG 56034 / CIP 105152 / NBRC 16084 / F199).